The chain runs to 286 residues: Orotidine 5'-phosphate decarboxylase (286 aa).

Substrate is bound by residues Asp-35, 57–59 (KTH), 89–98 (DRKFADIGNT), Tyr-239, and Arg-257. The Proton donor role is filled by Lys-91.

The protein belongs to the OMP decarboxylase family.

It carries out the reaction orotidine 5'-phosphate + H(+) = UMP + CO2. It participates in pyrimidine metabolism; UMP biosynthesis via de novo pathway; UMP from orotate: step 2/2. This is Orotidine 5'-phosphate decarboxylase (URA3) from Yarrowia lipolytica (strain CLIB 122 / E 150) (Yeast).